The chain runs to 170 residues: Cyclic pyranopterin monophosphate synthase (170 aa).

Residues 75–77 (LCH) and 113–114 (ME) each bind substrate. Aspartate 128 is an active-site residue.

This sequence belongs to the MoaC family. As to quaternary structure, homohexamer; trimer of dimers.

It carries out the reaction (8S)-3',8-cyclo-7,8-dihydroguanosine 5'-triphosphate = cyclic pyranopterin phosphate + diphosphate. It functions in the pathway cofactor biosynthesis; molybdopterin biosynthesis. Catalyzes the conversion of (8S)-3',8-cyclo-7,8-dihydroguanosine 5'-triphosphate to cyclic pyranopterin monophosphate (cPMP). This chain is Cyclic pyranopterin monophosphate synthase, found in Pelotomaculum thermopropionicum (strain DSM 13744 / JCM 10971 / SI).